A 264-amino-acid polypeptide reads, in one-letter code: Glutamate racemase (264 aa).

Substrate is bound by residues 10 to 11 (DS) and 42 to 43 (YG). Cysteine 73 functions as the Proton donor/acceptor in the catalytic mechanism. A substrate-binding site is contributed by 74-75 (NT). The active-site Proton donor/acceptor is cysteine 183. 184–185 (TH) contacts substrate.

It belongs to the aspartate/glutamate racemases family.

It catalyses the reaction L-glutamate = D-glutamate. It functions in the pathway cell wall biogenesis; peptidoglycan biosynthesis. Functionally, provides the (R)-glutamate required for cell wall biosynthesis. In Streptococcus pyogenes serotype M18 (strain MGAS8232), this protein is Glutamate racemase.